A 386-amino-acid polypeptide reads, in one-letter code: Patatin group M-1 (386 aa).

The first 23 residues, 1 to 23 (MATTKSFLILFFMILATTSSTCA), serve as a signal peptide directing secretion. In terms of domain architecture, PNPLA spans 32–229 (LSIDGGGIKG…TVGDPALLSL (198 aa)). Residues 36–41 (GGGIKG) carry the GXGXXG motif. Positions 75–79 (GTSTG) match the GXSXG motif. Residue Ser-77 is the Nucleophile of the active site. A glycan (N-linked (GlcNAc...) asparagine) is linked at Asn-115. The Proton acceptor role is filled by Asp-215. A DGA/G motif is present at residues 215-217 (DGG).

The protein belongs to the patatin family. In terms of tissue distribution, tuber.

Its subcellular location is the vacuole. Functionally, probable lipolytic acyl hydrolase (LAH), an activity which is thought to be involved in the response of tubers to pathogens. The polypeptide is Patatin group M-1 (Solanum tuberosum (Potato)).